We begin with the raw amino-acid sequence, 406 residues long: Phloroisovalerophenone synthase (406 aa).

Cys171 is an active-site residue.

Belongs to the thiolase-like superfamily. Chalcone/stilbene synthases family.

It catalyses the reaction 3-methylbutanoyl-CoA + 3 malonyl-CoA + 3 H(+) = phlorisovalerophenone + 3 CO2 + 4 CoA. Its function is as follows. Produces 3-methyl-1-(2,4,6-trihydroxyphenyl)butan-1-one (phloroisovalerophenone). The protein is Phloroisovalerophenone synthase (VPS) of Psilotum nudum (Whisk fern).